We begin with the raw amino-acid sequence, 798 residues long: Penicillin-binding protein 1A (798 aa).

Residues 2–9 are Cytoplasmic-facing; that stretch reads IKKILTTC. A helical; Signal-anchor for type II membrane protein transmembrane segment spans residues 10-30; the sequence is FGLFFGFCVFGVGLVAIAILV. The Periplasmic portion of the chain corresponds to 31 to 798; sequence TYPKLPSLDS…SKQQQLDSLF (768 aa). The segment at 50 to 218 is transglycosylase; it reads LTIYSADGEV…SAYNPIVNPE (169 aa). The active-site Proton donor; for transglycosylase activity is the Glu-88. Residues 378–700 are transpeptidase; the sequence is RRALGFAARA…GTIAVPVWVD (323 aa). Catalysis depends on Ser-461, which acts as the Acyl-ester intermediate; for transpeptidase activity. The tract at residues 739 to 798 is disordered; the sequence is LMLDNSGIAPQPSRRAKEDDEAAVENEQQGRSDETRQDVQETPVLPSNTDSKQQQLDSLF. Over residues 766-777 the composition is skewed to basic and acidic residues; sequence QQGRSDETRQDV. Positions 783 to 798 are enriched in polar residues; sequence LPSNTDSKQQQLDSLF.

In the N-terminal section; belongs to the glycosyltransferase 51 family. It in the C-terminal section; belongs to the transpeptidase family.

Its subcellular location is the cell inner membrane. The catalysed reaction is [GlcNAc-(1-&gt;4)-Mur2Ac(oyl-L-Ala-gamma-D-Glu-L-Lys-D-Ala-D-Ala)](n)-di-trans,octa-cis-undecaprenyl diphosphate + beta-D-GlcNAc-(1-&gt;4)-Mur2Ac(oyl-L-Ala-gamma-D-Glu-L-Lys-D-Ala-D-Ala)-di-trans,octa-cis-undecaprenyl diphosphate = [GlcNAc-(1-&gt;4)-Mur2Ac(oyl-L-Ala-gamma-D-Glu-L-Lys-D-Ala-D-Ala)](n+1)-di-trans,octa-cis-undecaprenyl diphosphate + di-trans,octa-cis-undecaprenyl diphosphate + H(+). It catalyses the reaction Preferential cleavage: (Ac)2-L-Lys-D-Ala-|-D-Ala. Also transpeptidation of peptidyl-alanyl moieties that are N-acyl substituents of D-alanine.. The protein operates within cell wall biogenesis; peptidoglycan biosynthesis. Functionally, cell wall formation. Synthesis of cross-linked peptidoglycan from the lipid intermediates. The enzyme has a penicillin-insensitive transglycosylase N-terminal domain (formation of linear glycan strands) and a penicillin-sensitive transpeptidase C-terminal domain (cross-linking of the peptide subunits). Essential for cell wall synthesis. The polypeptide is Penicillin-binding protein 1A (mrcA) (Neisseria gonorrhoeae (strain ATCC 700825 / FA 1090)).